A 268-amino-acid chain; its full sequence is UPF0328 protein ECU10_1850 (268 aa).

The protein belongs to the UPF0328 family.

In Encephalitozoon cuniculi (strain GB-M1) (Microsporidian parasite), this protein is UPF0328 protein ECU10_1850.